The sequence spans 98 residues: C-X-C motif chemokine 10 (98 aa).

The N-terminal stretch at 1 to 21 is a signal peptide; sequence MNQTAILICCLVFLTLSGIQG. Arginine 26 bears the Citrulline mark. Intrachain disulfides connect cysteine 30/cysteine 57 and cysteine 32/cysteine 74.

Belongs to the intercrine alpha (chemokine CxC) family.

The protein resides in the secreted. Chemotactic for monocytes and T-lymphocytes. Binds to CXCR3. This Macaca mulatta (Rhesus macaque) protein is C-X-C motif chemokine 10 (CXCL10).